Reading from the N-terminus, the 125-residue chain is Small ribosomal subunit protein uS13 (125 aa).

Belongs to the universal ribosomal protein uS13 family. As to quaternary structure, part of the 30S ribosomal subunit. Forms a loose heterodimer with protein S19. Forms two bridges to the 50S subunit in the 70S ribosome.

In terms of biological role, located at the top of the head of the 30S subunit, it contacts several helices of the 16S rRNA. In the 70S ribosome it contacts the 23S rRNA (bridge B1a) and protein L5 of the 50S subunit (bridge B1b), connecting the 2 subunits; these bridges are implicated in subunit movement. Contacts the tRNAs in the A and P-sites. The polypeptide is Small ribosomal subunit protein uS13 (Rickettsia bellii (strain OSU 85-389)).